Here is a 559-residue protein sequence, read N- to C-terminus: Dihydroxy-acid dehydratase (559 aa).

Cys56 lines the [2Fe-2S] cluster pocket. A Mg(2+)-binding site is contributed by Asp88. Cys129 lines the [2Fe-2S] cluster pocket. Mg(2+)-binding residues include Asp130 and Lys131. The residue at position 131 (Lys131) is an N6-carboxylysine. Cys198 serves as a coordination point for [2Fe-2S] cluster. Glu449 is a binding site for Mg(2+). Ser475 functions as the Proton acceptor in the catalytic mechanism.

This sequence belongs to the IlvD/Edd family. Homodimer. It depends on [2Fe-2S] cluster as a cofactor. The cofactor is Mg(2+).

The catalysed reaction is (2R)-2,3-dihydroxy-3-methylbutanoate = 3-methyl-2-oxobutanoate + H2O. It carries out the reaction (2R,3R)-2,3-dihydroxy-3-methylpentanoate = (S)-3-methyl-2-oxopentanoate + H2O. The protein operates within amino-acid biosynthesis; L-isoleucine biosynthesis; L-isoleucine from 2-oxobutanoate: step 3/4. It functions in the pathway amino-acid biosynthesis; L-valine biosynthesis; L-valine from pyruvate: step 3/4. Functions in the biosynthesis of branched-chain amino acids. Catalyzes the dehydration of (2R,3R)-2,3-dihydroxy-3-methylpentanoate (2,3-dihydroxy-3-methylvalerate) into 2-oxo-3-methylpentanoate (2-oxo-3-methylvalerate) and of (2R)-2,3-dihydroxy-3-methylbutanoate (2,3-dihydroxyisovalerate) into 2-oxo-3-methylbutanoate (2-oxoisovalerate), the penultimate precursor to L-isoleucine and L-valine, respectively. The sequence is that of Dihydroxy-acid dehydratase from Ruthia magnifica subsp. Calyptogena magnifica.